The chain runs to 151 residues: Flagellar assembly factor FliW (151 aa).

This sequence belongs to the FliW family. Interacts with translational regulator CsrA and flagellin(s).

It is found in the cytoplasm. Acts as an anti-CsrA protein, binds CsrA and prevents it from repressing translation of its target genes, one of which is flagellin. Binds to flagellin and participates in the assembly of the flagellum. The protein is Flagellar assembly factor FliW of Halalkalibacterium halodurans (strain ATCC BAA-125 / DSM 18197 / FERM 7344 / JCM 9153 / C-125) (Bacillus halodurans).